We begin with the raw amino-acid sequence, 235 residues long: Large ribosomal subunit protein uL1 (235 aa).

Belongs to the universal ribosomal protein uL1 family. Part of the 50S ribosomal subunit.

In terms of biological role, binds directly to 23S rRNA. The L1 stalk is quite mobile in the ribosome, and is involved in E site tRNA release. Functionally, protein L1 is also a translational repressor protein, it controls the translation of the L11 operon by binding to its mRNA. This is Large ribosomal subunit protein uL1 from Parasynechococcus marenigrum (strain WH8102).